We begin with the raw amino-acid sequence, 643 residues long: Extracellular metalloproteinase 4 (643 aa).

The first 18 residues, 1 to 18 (MHGLLLAGLLALPLNVLA), serve as a signal peptide directing secretion. Residues 19–254 (HPTESHSSGI…VHSVVDYVSA (236 aa)) constitute a propeptide that is removed on maturation. A compositionally biased stretch (basic and acidic residues) spans 47–57 (TKSDAVPKQDD). The interval 47-71 (TKSDAVPKQDDESFTTSSTGDDNVS) is disordered. Polar residues predominate over residues 60–71 (FTTSSTGDDNVS). 2 N-linked (GlcNAc...) asparagine glycosylation sites follow: Asn271 and Asn420. His437 provides a ligand contact to Zn(2+). The active site involves Glu438. Residue His441 participates in Zn(2+) binding. Residue Asn510 is glycosylated (N-linked (GlcNAc...) asparagine).

This sequence belongs to the peptidase M36 family. Zn(2+) is required as a cofactor.

The protein resides in the secreted. Its function is as follows. Secreted metalloproteinase probably acting as a virulence factor. The chain is Extracellular metalloproteinase 4 (MEP4) from Trichophyton equinum (Horse ringworm fungus).